A 184-amino-acid polypeptide reads, in one-letter code: ATP synthase subunit delta (184 aa).

This sequence belongs to the ATPase delta chain family. In terms of assembly, F-type ATPases have 2 components, F(1) - the catalytic core - and F(0) - the membrane proton channel. F(1) has five subunits: alpha(3), beta(3), gamma(1), delta(1), epsilon(1). F(0) has three main subunits: a(1), b(2) and c(10-14). The alpha and beta chains form an alternating ring which encloses part of the gamma chain. F(1) is attached to F(0) by a central stalk formed by the gamma and epsilon chains, while a peripheral stalk is formed by the delta and b chains.

The protein resides in the cell inner membrane. F(1)F(0) ATP synthase produces ATP from ADP in the presence of a proton or sodium gradient. F-type ATPases consist of two structural domains, F(1) containing the extramembraneous catalytic core and F(0) containing the membrane proton channel, linked together by a central stalk and a peripheral stalk. During catalysis, ATP synthesis in the catalytic domain of F(1) is coupled via a rotary mechanism of the central stalk subunits to proton translocation. Functionally, this protein is part of the stalk that links CF(0) to CF(1). It either transmits conformational changes from CF(0) to CF(1) or is implicated in proton conduction. In Rickettsia massiliae (strain Mtu5), this protein is ATP synthase subunit delta.